A 453-amino-acid polypeptide reads, in one-letter code: Serine incorporator 1 (453 aa).

G2 carries the N-myristoyl glycine lipid modification. Residues 2-39 (GSVLGLCSVASWIPCLCGSAPCLLCRCCPSGNNSTVTR) are Cytoplasmic-facing. A helical membrane pass occupies residues 40-60 (LIYALFLLVGVCVACVMLIPG). Residues 61-88 (MEEQLNKIPGFCENEKGVVPCNILVGYK) are Lumenal-facing. The chain crosses the membrane as a helical span at residues 89 to 109 (AVYRLCFGLAMFYLLLSLLMI). The Cytoplasmic portion of the chain corresponds to 110–123 (KVKSSSDPRAAVHN). The chain crosses the membrane as a helical span at residues 124 to 144 (GFWFFKFATAVAIIIGAFFIP). Topologically, residues 145–151 (EGTFTTV) are lumenal. A helical membrane pass occupies residues 152 to 172 (WFYVGMAGAFCFILIQLVLLI). Over 173–197 (DFAHSWNESWVEKMEEGNSRCWYAA) the chain is Cytoplasmic. The chain crosses the membrane as a helical span at residues 198-218 (LLSATALNYLLSLVAVVLFFV). Topologically, residues 219-231 (YYTHPASCAENKA) are lumenal. Residues 232 to 252 (FISVNMLLCIGASVMSILPKI) form a helical membrane-spanning segment. Over 253-259 (QESQPRS) the chain is Cytoplasmic. Residues 260–280 (GLLQSSVITVYTMYLTWSAMT) traverse the membrane as a helical segment. The Lumenal segment spans residues 281 to 309 (NEPETNCNPSLLSIIGFNTTRPIPKDGQS). Residues 310 to 330 (VQWWHPQGIIGLVLFLLCVFY) form a helical membrane-spanning segment. Topologically, residues 331 to 387 (SSIRTSNNSQVNKLTLTSDESTLIEDGNGRSDGSLDDGDGIHRAVDNERDGVTYSYS) are cytoplasmic. S351 bears the Phosphoserine mark. Position 352 is a phosphothreonine (T352). S361 and S364 each carry phosphoserine. The chain crosses the membrane as a helical span at residues 388–408 (FFHFMLFLASLYIMMTLTNWY). Residues 409-426 (RYEPSREMKSQWTAVWVK) are Lumenal-facing. Residues 427–447 (ISSSWIGLVLYVWTLVAPLVL) form a helical membrane-spanning segment. The Cytoplasmic portion of the chain corresponds to 448-453 (TNRDFD).

The protein belongs to the TDE1 family. Interacts with SPTLC1. In terms of tissue distribution, highly expressed in the neuronal populations such as Purkinje cells in the cerebellum, brainstem and spinal motor neurons, locus coeruleus and raphe nuclei.

Its subcellular location is the endoplasmic reticulum membrane. Enhances the incorporation of serine into phosphatidylserine and sphingolipids. This Mus musculus (Mouse) protein is Serine incorporator 1 (Serinc1).